The following is a 213-amino-acid chain: MANRENKPVIIGVTGGSGSGKTTVSRAIFEQLHGHSLLMLQEDSYYNDQSDMPFEERIKTNYDHPNAFDTELLVKQLKDLLDWKTIEKPIYDYTEHTRSSEVEKVEPKEVIILEGILVLNDPALRDLMDIKIFVDTDDDIRIIRRIQRDIEERGRSLQSVIDQYKSTVKPMYHQFIEPTKRYADIIVPEGGENQVAIDLLVTKVRDILRKREK.

An ATP-binding site is contributed by 15–22; the sequence is GGSGSGKT.

The protein belongs to the uridine kinase family.

It localises to the cytoplasm. The enzyme catalyses uridine + ATP = UMP + ADP + H(+). It carries out the reaction cytidine + ATP = CMP + ADP + H(+). The protein operates within pyrimidine metabolism; CTP biosynthesis via salvage pathway; CTP from cytidine: step 1/3. It functions in the pathway pyrimidine metabolism; UMP biosynthesis via salvage pathway; UMP from uridine: step 1/1. This is Uridine kinase from Ligilactobacillus salivarius (strain UCC118) (Lactobacillus salivarius).